Reading from the N-terminus, the 439-residue chain is 3beta-hydroxysteroid-dehydrogenase/decarboxylase isoform 1 (439 aa).

16–21 (GGRGFA) contributes to the NAD(+) binding site. Asn75 and Asn158 each carry an N-linked (GlcNAc...) asparagine glycan. 2 residues coordinate NAD(+): Tyr161 and Lys165. The active-site Proton donor is Lys165. N-linked (GlcNAc...) asparagine glycosylation occurs at Asn327. Residues 371 to 439 (VTETIQWKKQ…MKVFGSKKID (69 aa)) form the Reticulon; atypical domain. 2 consecutive transmembrane segments (helical) span residues 381–401 (TLIA…TTGS) and 405–425 (IITA…INGI).

It belongs to the 3-beta-HSD family.

It localises to the endoplasmic reticulum membrane. The catalysed reaction is a 3beta-hydroxysteroid-4alpha-carboxylate + NAD(+) = a 3-oxosteroid + CO2 + NADH. It catalyses the reaction 4alpha-carboxy-4beta,14alpha-dimethyl-9beta,19-cyclo-5alpha-ergost-24(24(1))-en-3beta-ol + NAD(+) = cycloeucalenone + CO2 + NADH. It participates in steroid biosynthesis; zymosterol biosynthesis; zymosterol from lanosterol: step 4/6. In terms of biological role, 3beta-hydroxysteroid-dehydrogenase/decarboxylase involved in sterol synthesis. Catalyzes the formation of 3-oxosteroids from 3beta-hydroxysteroids-4alpha-carboxylate. Involved in the regulation of inflorescence internodes and leaves growth, probably by affecting auxin transporter activity possibly by altering sterol composition in the membranes. The protein is 3beta-hydroxysteroid-dehydrogenase/decarboxylase isoform 1 of Arabidopsis thaliana (Mouse-ear cress).